Here is a 523-residue protein sequence, read N- to C-terminus: Ubiquilin (523 aa).

The region spanning 2–77 (VKINIKSSTD…VHLVKGAAPP (76 aa)) is the Ubiquitin-like domain. Residues 70–99 (LVKGAAPPPPPPVEQQVPTPSNTQPQGIPG) form a disordered region. STI1 domains follow at residues 100-135 (VPQN…FRDM) and 139-178 (NPEM…MREM). A compositionally biased stretch (low complexity) spans 215 to 227 (NQQAASQNQTNSN). The disordered stretch occupies residues 215 to 325 (NQQAASQNQT…ASMFGGGGGG (111 aa)). Over residues 228-241 (PIQTNTDANPNSQP) the composition is skewed to polar residues. A compositionally biased stretch (low complexity) spans 245–278 (PWSTNSSSTSSNPTSSSPSSRPTTGSSTNTGASN). Residues 285-296 (SGGGGGMGGGTN) show a composition bias toward gly residues. A compositionally biased stretch (low complexity) spans 297-310 (NTGTNNTGSTNNTG). 2 consecutive STI1 domains span residues 339-380 (DPER…RQMM) and 383-415 (NPQL…QQAM). Residues 480-523 (PPEQRFRLQLEQLEELGFVDRAANISALTSTNGNINLAIDRLLR) form the UBA domain.

In terms of biological role, stable protein which acts as an antagonist of nosA by repressing cellular differentiation after the tight-aggregate stage, when cells differentiate into two precursor cell types, prespore and prestalk cells, prior to the formation of fruiting bodies. This chain is Ubiquilin (ubqln), found in Dictyostelium discoideum (Social amoeba).